The primary structure comprises 239 residues: LexA repressor (239 aa).

Positions 26-46 (FDEMKDALDLASKSGIHRLIT) form a DNA-binding region, H-T-H motif. Catalysis depends on for autocatalytic cleavage activity residues S159 and K197.

The protein belongs to the peptidase S24 family. Homodimer.

The catalysed reaction is Hydrolysis of Ala-|-Gly bond in repressor LexA.. Functionally, represses a number of genes involved in the response to DNA damage (SOS response), including recA and lexA. In the presence of single-stranded DNA, RecA interacts with LexA causing an autocatalytic cleavage which disrupts the DNA-binding part of LexA, leading to derepression of the SOS regulon and eventually DNA repair. The polypeptide is LexA repressor (Allorhizobium ampelinum (strain ATCC BAA-846 / DSM 112012 / S4) (Agrobacterium vitis (strain S4))).